The primary structure comprises 314 residues: R2-like ligand binding oxidase (314 aa).

Residues Glu68, Glu101, and His104 each coordinate Mn(2+). Residues 71-162 (VTEDIQPFMS…AAQVRASVTY (92 aa)) constitute a cross-link (3-(O4'-tyrosyl)-valine (Val-Tyr)). Glu101 provides a ligand contact to Fe cation. Positions 167, 202, and 205 each coordinate Fe cation.

This sequence belongs to the ribonucleoside diphosphate reductase small chain family. R2-like ligand binding oxidase subfamily. As to quaternary structure, homodimer. Requires Fe cation as cofactor. It depends on Mn(2+) as a cofactor.

Probable oxidase that might be involved in lipid metabolism. In Mycobacterium tuberculosis (strain ATCC 25177 / H37Ra), this protein is R2-like ligand binding oxidase.